Here is a 424-residue protein sequence, read N- to C-terminus: Tol-Pal system protein TolB (424 aa).

Residues 1 to 24 form the signal peptide; that stretch reads MNKARAIARWISFLLLIAAGQVCA.

Belongs to the TolB family. The Tol-Pal system is composed of five core proteins: the inner membrane proteins TolA, TolQ and TolR, the periplasmic protein TolB and the outer membrane protein Pal. They form a network linking the inner and outer membranes and the peptidoglycan layer.

Its subcellular location is the periplasm. Part of the Tol-Pal system, which plays a role in outer membrane invagination during cell division and is important for maintaining outer membrane integrity. The chain is Tol-Pal system protein TolB from Methylococcus capsulatus (strain ATCC 33009 / NCIMB 11132 / Bath).